The chain runs to 1464 residues: DNA-directed RNA polymerase subunit beta' (1464 aa).

The Zn(2+) site is built by Cys66, Cys68, Cys96, and Cys99. 3 residues coordinate Mg(2+): Asp491, Asp493, and Asp495. Zn(2+)-binding residues include Cys838, Cys912, Cys919, and Cys922. Residues Asn1143–Asp1200 show a composition bias toward acidic residues. Positions Asn1143 to Asp1229 are disordered. Over residues His1204–Asn1219 the composition is skewed to low complexity. A compositionally biased stretch (acidic residues) spans Tyr1220–Asp1229.

This sequence belongs to the RNA polymerase beta' chain family. As to quaternary structure, the RNAP catalytic core consists of 2 alpha, 1 beta, 1 beta' and 1 omega subunit. When a sigma factor is associated with the core the holoenzyme is formed, which can initiate transcription. Requires Mg(2+) as cofactor. Zn(2+) serves as cofactor.

It catalyses the reaction RNA(n) + a ribonucleoside 5'-triphosphate = RNA(n+1) + diphosphate. Functionally, DNA-dependent RNA polymerase catalyzes the transcription of DNA into RNA using the four ribonucleoside triphosphates as substrates. The chain is DNA-directed RNA polymerase subunit beta' from Karelsulcia muelleri (strain GWSS) (Sulcia muelleri).